A 61-amino-acid chain; its full sequence is Large ribosomal subunit protein uL30 (61 aa).

The protein belongs to the universal ribosomal protein uL30 family. As to quaternary structure, part of the 50S ribosomal subunit.

The protein is Large ribosomal subunit protein uL30 of Lactobacillus acidophilus (strain ATCC 700396 / NCK56 / N2 / NCFM).